The sequence spans 321 residues: Transaldolase (321 aa).

Lys132 (schiff-base intermediate with substrate) is an active-site residue.

Belongs to the transaldolase family. Type 1 subfamily. Homodimer.

It localises to the cytoplasm. The catalysed reaction is D-sedoheptulose 7-phosphate + D-glyceraldehyde 3-phosphate = D-erythrose 4-phosphate + beta-D-fructose 6-phosphate. The protein operates within carbohydrate degradation; pentose phosphate pathway; D-glyceraldehyde 3-phosphate and beta-D-fructose 6-phosphate from D-ribose 5-phosphate and D-xylulose 5-phosphate (non-oxidative stage): step 2/3. Functionally, transaldolase is important for the balance of metabolites in the pentose-phosphate pathway. The polypeptide is Transaldolase (Rhizobium etli (strain ATCC 51251 / DSM 11541 / JCM 21823 / NBRC 15573 / CFN 42)).